Reading from the N-terminus, the 201-residue chain is Holliday junction resolvase RecU (201 aa).

4 residues coordinate Mg(2+): Thr-87, Asp-89, Glu-102, and Gln-121.

Belongs to the RecU family. Requires Mg(2+) as cofactor.

It is found in the cytoplasm. The enzyme catalyses Endonucleolytic cleavage at a junction such as a reciprocal single-stranded crossover between two homologous DNA duplexes (Holliday junction).. Functionally, endonuclease that resolves Holliday junction intermediates in genetic recombination. Cleaves mobile four-strand junctions by introducing symmetrical nicks in paired strands. Promotes annealing of linear ssDNA with homologous dsDNA. Required for DNA repair, homologous recombination and chromosome segregation. The sequence is that of Holliday junction resolvase RecU from Listeria welshimeri serovar 6b (strain ATCC 35897 / DSM 20650 / CCUG 15529 / CIP 8149 / NCTC 11857 / SLCC 5334 / V8).